The sequence spans 895 residues: Androgen receptor (895 aa).

The tract at residues 1 to 533 is modulating; sequence MEVQLGLGRV…PIDYYFPPQK (533 aa). Residues 1 to 562 form an interaction with ZNF318 region; the sequence is MEVQLGLGRV…GSCKVFFKRA (562 aa). 2 disordered regions span residues 33-150 and 178-211; these read VIQN…LSLL and QQQQQEAVSEGSSSGRAREASGAPTSSKDNYLEG. Composition is skewed to low complexity over residues 44 to 81 and 178 to 200; these read AASAAPPGASLQQQQQQQQETSPRQQQQQQQGEDGSPQ and QQQQQEAVSEGSSSGRAREASGA. Ser65 is subject to Phosphoserine; by CDK9. A Phosphoserine modification is found at Ser79. Over residues 201-211 the composition is skewed to polar residues; that stretch reads PTSSKDNYLEG. Phosphotyrosine; by CSK is present on Tyr208. At Ser241 the chain carries Phosphoserine. Tyr252 carries the post-translational modification Phosphotyrosine; by CSK and TNK2. Phosphotyrosine; by CSK occurs at positions 292, 331, 342, and 347. The residue at position 348 (Tyr348) is a Phosphotyrosine; by CSK and TNK2. Residue Lys371 forms a Glycyl lysine isopeptide (Lys-Gly) (interchain with G-Cter in SUMO) linkage. Tyr378 carries the phosphotyrosine; by CSK modification. A Glycyl lysine isopeptide (Lys-Gly) (interchain with G-Cter in SUMO) cross-link involves residue Lys496. A phosphotyrosine; by CSK mark is found at Tyr510 and Tyr527. The tract at residues 527 to 894 is interaction with LPXN; the sequence is YYFPPQKTCL…GKVKPIYFHT (368 aa). The nuclear receptor DNA-binding region spans 534–607; that stretch reads TCLICGDEAS…AGMTLGARKL (74 aa). NR C4-type zinc fingers lie at residues 535 to 555 and 571 to 595; these read CLICGDEASGCHYGALTCGSC and CASRNDCTIDKFRRKNCPSCRLRKC. The tract at residues 547-637 is interaction with HIPK3; that stretch reads YGALTCGSCK…TEETAQKLTV (91 aa). Positions 567-894 are interaction with CCAR1; sequence QKYLCASRND…GKVKPIYFHT (328 aa). An interaction with KAT7 region spans residues 600–894; the sequence is MTLGARKLKK…GKVKPIYFHT (295 aa). Ser626 is subject to Phosphoserine; by STK4/MST1. Residues 644–875 enclose the NR LBD domain; sequence ECQPIFLNVL…DFPEMMAEII (232 aa). 2 residues coordinate 17beta-hydroxy-5alpha-androstan-3-one: Asn681 and Arg728. Glycyl lysine isopeptide (Lys-Gly) (interchain with G-Cter in ubiquitin) cross-links involve residues Lys821 and Lys823. A 17beta-hydroxy-5alpha-androstan-3-one-binding site is contributed by Thr853. At Tyr891 the chain carries Phosphotyrosine; by CSK.

The protein belongs to the nuclear hormone receptor family. NR3 subfamily. As to quaternary structure, binds DNA as a homodimer. Part of a ternary complex containing AR, EFCAB6/DJBP and PARK7. Interacts with HIPK3 and NR0B2 in the presence of androgen. The ligand binding domain interacts with KAT7/HBO1 in the presence of dihydrotestosterone. Interacts with EFCAB6/DJBP, PQBP1, RANBP9, RBAK, SPDEF, SRA1, TGFB1I1 and RREB1. Interacts with ZMIZ1/ZIMP10 and ZMIZ2/ZMIP7 which both enhance its transactivation activity. Interacts with SLC30A9 and RAD54L2/ARIP4. Interacts with MACROD1 (via macro domain). Interacts via the ligand-binding domain with LXXLL and FXXLF motifs from NCOA1, NCOA2, NCOA3 and MAGEA11. Interacts (via nuclear receptor DNA binding domain and nuclear receptor ligand binding domain) with NCOA4. The AR N-terminal poly-Gln region binds Ran resulting in enhancement of AR-mediated transactivation. Ran-binding decreases as the poly-Gln length increases. Interacts with HIP1 (via coiled coil domain). Interacts (via ligand-binding domain) with TRIM68. Interacts with TNK2. Interacts with USP26. Interacts with RNF6. Interacts (regulated by RNF6 probably through polyubiquitination) with RNF14; regulates AR transcriptional activity. Interacts with PRMT2 and TRIM24. Interacts with RACK1. Interacts with RANBP10; this interaction enhances dihydrotestosterone-induced AR transcriptional activity. Interacts with PRPF6 in a hormone-independent way; this interaction enhances dihydrotestosterone-induced AR transcriptional activity. Interacts with STK4/MST1. Interacts with ZIPK/DAPK3. Interacts with LPXN. Interacts with MAK. Part of a complex containing AR, MAK and NCOA3. Interacts with CRY1. Interacts with CCAR1 and GATA2. Interacts with ZNF318. Interacts with BUD31. Interacts with ARID4A. Interacts with ARID4B. Interacts (via NR LBD domain) with ZBTB7A; the interaction is direct and androgen-dependent. Interacts with NCOR1. Interacts with NCOR2. Interacts with CRY2 in a ligand-dependent manner. In terms of processing, phosphorylated in prostate cancer cells in response to several growth factors including EGF. Phosphorylation is induced by c-Src kinase (CSK). Tyr-510 is one of the major phosphorylation sites and an increase in phosphorylation and Src kinase activity is associated with prostate cancer progression. Phosphorylation by TNK2 enhances the DNA-binding and transcriptional activity. Phosphorylation at Ser-65 by CDK9 regulates AR promoter selectivity and cell growth. Sumoylated on Lys-371 (major) and Lys-496. Ubiquitinated. Deubiquitinated by USP26. 'Lys-6' and 'Lys-27'-linked polyubiquitination by RNF6 modulates AR transcriptional activity and specificity. Post-translationally, palmitoylated by ZDHHC7 and ZDHHC21. Palmitoylation is required for plasma membrane targeting and for rapid intracellular signaling via ERK and AKT kinases and cAMP generation.

It is found in the nucleus. Its subcellular location is the cytoplasm. Steroid hormone receptors are ligand-activated transcription factors that regulate eukaryotic gene expression and affect cellular proliferation and differentiation in target tissues. Transcription factor activity is modulated by bound coactivator and corepressor proteins like ZBTB7A that recruits NCOR1 and NCOR2 to the androgen response elements/ARE on target genes, negatively regulating androgen receptor signaling and androgen-induced cell proliferation. Transcription activation is also down-regulated by NR0B2. Activated, but not phosphorylated, by HIPK3 and ZIPK/DAPK3. The polypeptide is Androgen receptor (AR) (Macaca mulatta (Rhesus macaque)).